The following is a 474-amino-acid chain: Tubulin gamma-1 chain (474 aa).

GTP is bound at residue 142-148 (AGGTGSG).

This sequence belongs to the tubulin family. As to quaternary structure, gamma-tubulin complex is composed of gamma-tubulin and GCP proteins.

It localises to the cytoplasm. Its subcellular location is the cytoskeleton. The protein resides in the microtubule organizing center. It is found in the nucleus. The protein localises to the cell cortex. In terms of biological role, tubulin is the major constituent of microtubules. The gamma chain is found at microtubule organizing centers (MTOC) such as the spindle poles, suggesting that it is involved in the minus-end nucleation of microtubule assembly. Gamma-tubulin complex is essential for the control of microtubular network remodeling in the course of initiation and development of giant-feeding cells, and for the successful reproduction of nematodes (e.g. Meloidogyne spp.) in their plant hosts. In Arabidopsis thaliana (Mouse-ear cress), this protein is Tubulin gamma-1 chain (TUBG1).